The sequence spans 578 residues: Sulfite reductase [NADPH] hemoprotein beta-component (578 aa).

Cys-441, Cys-447, Cys-487, and Cys-491 together coordinate [4Fe-4S] cluster. Cys-491 lines the siroheme pocket.

The protein belongs to the nitrite and sulfite reductase 4Fe-4S domain family. As to quaternary structure, alpha(8)-beta(8). The alpha component is a flavoprotein, the beta component is a hemoprotein. The cofactor is siroheme. Requires [4Fe-4S] cluster as cofactor.

It carries out the reaction hydrogen sulfide + 3 NADP(+) + 3 H2O = sulfite + 3 NADPH + 4 H(+). It participates in sulfur metabolism; hydrogen sulfide biosynthesis; hydrogen sulfide from sulfite (NADPH route): step 1/1. Its function is as follows. Component of the sulfite reductase complex that catalyzes the 6-electron reduction of sulfite to sulfide. This is one of several activities required for the biosynthesis of L-cysteine from sulfate. The polypeptide is Sulfite reductase [NADPH] hemoprotein beta-component (Vibrio parahaemolyticus serotype O3:K6 (strain RIMD 2210633)).